The primary structure comprises 153 residues: MSKHSLIENLKKQIEPIAEGLDYELYHIEFVKEGKENYLRIYIDSENGVSLEGCEKVSRAISELLDDIDPIQESYYLEVSSPGIDRVLYTDKHLEKYKSYNIVLNLYSPIDKKKKYEGELVDFNENEIDIKVEENIVTIPREKISKTTLKGEL.

Belongs to the RimP family.

Its subcellular location is the cytoplasm. Functionally, required for maturation of 30S ribosomal subunits. This is Ribosome maturation factor RimP from Clostridium botulinum (strain Kyoto / Type A2).